Reading from the N-terminus, the 367-residue chain is Anhydro-N-acetylmuramic acid kinase (367 aa).

An ATP-binding site is contributed by Gly-13 to Asp-20.

It belongs to the anhydro-N-acetylmuramic acid kinase family.

It catalyses the reaction 1,6-anhydro-N-acetyl-beta-muramate + ATP + H2O = N-acetyl-D-muramate 6-phosphate + ADP + H(+). It participates in amino-sugar metabolism; 1,6-anhydro-N-acetylmuramate degradation. The protein operates within cell wall biogenesis; peptidoglycan recycling. Catalyzes the specific phosphorylation of 1,6-anhydro-N-acetylmuramic acid (anhMurNAc) with the simultaneous cleavage of the 1,6-anhydro ring, generating MurNAc-6-P. Is required for the utilization of anhMurNAc either imported from the medium or derived from its own cell wall murein, and thus plays a role in cell wall recycling. The protein is Anhydro-N-acetylmuramic acid kinase of Neisseria gonorrhoeae (strain ATCC 700825 / FA 1090).